Consider the following 467-residue polypeptide: UDP-N-acetylmuramoylalanine--D-glutamate ligase (467 aa).

121-127 (GTNGKST) is an ATP binding site.

The protein belongs to the MurCDEF family.

Its subcellular location is the cytoplasm. It carries out the reaction UDP-N-acetyl-alpha-D-muramoyl-L-alanine + D-glutamate + ATP = UDP-N-acetyl-alpha-D-muramoyl-L-alanyl-D-glutamate + ADP + phosphate + H(+). It participates in cell wall biogenesis; peptidoglycan biosynthesis. Its function is as follows. Cell wall formation. Catalyzes the addition of glutamate to the nucleotide precursor UDP-N-acetylmuramoyl-L-alanine (UMA). This is UDP-N-acetylmuramoylalanine--D-glutamate ligase from Brucella abortus (strain 2308).